A 415-amino-acid polypeptide reads, in one-letter code: Imidazolonepropionase (415 aa).

Positions 80 and 82 each coordinate Fe(3+). Zn(2+) is bound by residues H80 and H82. 4-imidazolone-5-propanoate-binding residues include R89, Y152, and H185. Y152 is an N-formimidoyl-L-glutamate binding site. H250 is a binding site for Fe(3+). Zn(2+) is bound at residue H250. Residue Q253 participates in 4-imidazolone-5-propanoate binding. D325 lines the Fe(3+) pocket. D325 serves as a coordination point for Zn(2+). Positions 327 and 329 each coordinate N-formimidoyl-L-glutamate. T330 serves as a coordination point for 4-imidazolone-5-propanoate.

This sequence belongs to the metallo-dependent hydrolases superfamily. HutI family. The cofactor is Zn(2+). It depends on Fe(3+) as a cofactor.

It localises to the cytoplasm. It carries out the reaction 4-imidazolone-5-propanoate + H2O = N-formimidoyl-L-glutamate. Its pathway is amino-acid degradation; L-histidine degradation into L-glutamate; N-formimidoyl-L-glutamate from L-histidine: step 3/3. In terms of biological role, catalyzes the hydrolytic cleavage of the carbon-nitrogen bond in imidazolone-5-propanoate to yield N-formimidoyl-L-glutamate. It is the third step in the universal histidine degradation pathway. The chain is Imidazolonepropionase from Rhizobium meliloti (strain 1021) (Ensifer meliloti).